A 204-amino-acid chain; its full sequence is ATP-dependent Clp protease proteolytic subunit (204 aa).

Ser102 serves as the catalytic Nucleophile. His127 is a catalytic residue.

The protein belongs to the peptidase S14 family. In terms of assembly, fourteen ClpP subunits assemble into 2 heptameric rings which stack back to back to give a disk-like structure with a central cavity, resembling the structure of eukaryotic proteasomes.

It localises to the cytoplasm. It catalyses the reaction Hydrolysis of proteins to small peptides in the presence of ATP and magnesium. alpha-casein is the usual test substrate. In the absence of ATP, only oligopeptides shorter than five residues are hydrolyzed (such as succinyl-Leu-Tyr-|-NHMec, and Leu-Tyr-Leu-|-Tyr-Trp, in which cleavage of the -Tyr-|-Leu- and -Tyr-|-Trp bonds also occurs).. Its function is as follows. Cleaves peptides in various proteins in a process that requires ATP hydrolysis. Has a chymotrypsin-like activity. Plays a major role in the degradation of misfolded proteins. The polypeptide is ATP-dependent Clp protease proteolytic subunit (Neisseria gonorrhoeae (strain ATCC 700825 / FA 1090)).